We begin with the raw amino-acid sequence, 248 residues long: 1-(5-phosphoribosyl)-5-[(5-phosphoribosylamino)methylideneamino] imidazole-4-carboxamide isomerase (248 aa).

D8 acts as the Proton acceptor in catalysis. The active-site Proton donor is the D131.

It belongs to the HisA/HisF family.

The protein resides in the cytoplasm. The enzyme catalyses 1-(5-phospho-beta-D-ribosyl)-5-[(5-phospho-beta-D-ribosylamino)methylideneamino]imidazole-4-carboxamide = 5-[(5-phospho-1-deoxy-D-ribulos-1-ylimino)methylamino]-1-(5-phospho-beta-D-ribosyl)imidazole-4-carboxamide. The protein operates within amino-acid biosynthesis; L-histidine biosynthesis; L-histidine from 5-phospho-alpha-D-ribose 1-diphosphate: step 4/9. The polypeptide is 1-(5-phosphoribosyl)-5-[(5-phosphoribosylamino)methylideneamino] imidazole-4-carboxamide isomerase (Cupriavidus necator (strain ATCC 17699 / DSM 428 / KCTC 22496 / NCIMB 10442 / H16 / Stanier 337) (Ralstonia eutropha)).